A 103-amino-acid polypeptide reads, in one-letter code: Pyrimidine/purine nucleoside phosphorylase (103 aa).

The protein belongs to the nucleoside phosphorylase PpnP family.

It carries out the reaction a purine D-ribonucleoside + phosphate = a purine nucleobase + alpha-D-ribose 1-phosphate. It catalyses the reaction adenosine + phosphate = alpha-D-ribose 1-phosphate + adenine. The catalysed reaction is cytidine + phosphate = cytosine + alpha-D-ribose 1-phosphate. The enzyme catalyses guanosine + phosphate = alpha-D-ribose 1-phosphate + guanine. It carries out the reaction inosine + phosphate = alpha-D-ribose 1-phosphate + hypoxanthine. It catalyses the reaction thymidine + phosphate = 2-deoxy-alpha-D-ribose 1-phosphate + thymine. The catalysed reaction is uridine + phosphate = alpha-D-ribose 1-phosphate + uracil. The enzyme catalyses xanthosine + phosphate = alpha-D-ribose 1-phosphate + xanthine. Catalyzes the phosphorolysis of diverse nucleosides, yielding D-ribose 1-phosphate and the respective free bases. Can use uridine, adenosine, guanosine, cytidine, thymidine, inosine and xanthosine as substrates. Also catalyzes the reverse reactions. This Geobacter sp. (strain M21) protein is Pyrimidine/purine nucleoside phosphorylase.